Reading from the N-terminus, the 583-residue chain is Penicillin-binding protein activator LpoA (583 aa).

An N-terminal signal peptide occupies residues 1–24 (MATILKQKLKTFFVPTAITLLLSA). Residue cysteine 25 is the site of N-palmitoyl cysteine attachment. A lipid anchor (S-diacylglycerol cysteine) is attached at cysteine 25.

This sequence belongs to the LpoA family. In terms of assembly, interacts with PBP1a.

The protein localises to the cell outer membrane. Regulator of peptidoglycan synthesis that is essential for the function of penicillin-binding protein 1A (PBP1a). In Haemophilus ducreyi (strain 35000HP / ATCC 700724), this protein is Penicillin-binding protein activator LpoA.